Here is a 196-residue protein sequence, read N- to C-terminus: Large ribosomal subunit protein uL18 (196 aa).

Belongs to the universal ribosomal protein uL18 family. As to quaternary structure, part of the 50S ribosomal subunit. Contacts the 5S and 23S rRNAs.

This is one of the proteins that bind and probably mediate the attachment of the 5S RNA into the large ribosomal subunit, where it forms part of the central protuberance. This is Large ribosomal subunit protein uL18 from Thermofilum pendens (strain DSM 2475 / Hrk 5).